The sequence spans 103 residues: Spherulin-3A (103 aa).

Residues 1 to 13 form an N-terminal arm region; that stretch reads MSVCKGVSGNPAK. 2 consecutive Beta/gamma crystallin 'Greek key' domains span residues 14–55 and 57–99; these read GEVF…KVGP and TKAF…IVAT.

Belongs to the beta/gamma-crystallin family.

It is found in the cytoplasm. In terms of biological role, structural protein. The protein is Spherulin-3A of Physarum polycephalum (Slime mold).